Here is a 369-residue protein sequence, read N- to C-terminus: Methylthioribose-1-phosphate isomerase (369 aa).

Substrate-binding positions include 54–56, Arg-95, and Gln-208; that span reads RGA. The Proton donor role is filled by Asp-249. 259-260 serves as a coordination point for substrate; that stretch reads NK.

Belongs to the eIF-2B alpha/beta/delta subunits family. MtnA subfamily.

It carries out the reaction 5-(methylsulfanyl)-alpha-D-ribose 1-phosphate = 5-(methylsulfanyl)-D-ribulose 1-phosphate. It functions in the pathway amino-acid biosynthesis; L-methionine biosynthesis via salvage pathway; L-methionine from S-methyl-5-thio-alpha-D-ribose 1-phosphate: step 1/6. Its function is as follows. Catalyzes the interconversion of methylthioribose-1-phosphate (MTR-1-P) into methylthioribulose-1-phosphate (MTRu-1-P). This Desulfatibacillum aliphaticivorans protein is Methylthioribose-1-phosphate isomerase.